The following is a 75-amino-acid chain: MPHVDIKCFPRELTDEQKTALAADITEVLIRHLNSKESAVSVALTQVEPDAWQAVWDSEIAPQMAQLIKKPGYSM.

P2 functions as the Proton acceptor; via imino nitrogen in the catalytic mechanism.

This sequence belongs to the 4-oxalocrotonate tautomerase family. PptA subfamily. In terms of assembly, homodimer.

Its subcellular location is the cytoplasm. This is Tautomerase PptA from Klebsiella pneumoniae (strain 342).